The primary structure comprises 338 residues: Nicotinate-nucleotide--dimethylbenzimidazole phosphoribosyltransferase (338 aa).

Catalysis depends on glutamate 306, which acts as the Proton acceptor.

The protein belongs to the CobT family.

It catalyses the reaction 5,6-dimethylbenzimidazole + nicotinate beta-D-ribonucleotide = alpha-ribazole 5'-phosphate + nicotinate + H(+). It functions in the pathway nucleoside biosynthesis; alpha-ribazole biosynthesis; alpha-ribazole from 5,6-dimethylbenzimidazole: step 1/2. Catalyzes the synthesis of alpha-ribazole-5'-phosphate from nicotinate mononucleotide (NAMN) and 5,6-dimethylbenzimidazole (DMB). The protein is Nicotinate-nucleotide--dimethylbenzimidazole phosphoribosyltransferase of Cereibacter sphaeroides (strain KD131 / KCTC 12085) (Rhodobacter sphaeroides).